Reading from the N-terminus, the 145-residue chain is Large-conductance mechanosensitive channel (145 aa).

Transmembrane regions (helical) follow at residues 14 to 34 (VMDL…VKSL), 38 to 58 (LIMP…YFLP), and 81 to 101 (GSFL…FLMV).

It belongs to the MscL family. In terms of assembly, homopentamer.

It localises to the cell inner membrane. Its function is as follows. Channel that opens in response to stretch forces in the membrane lipid bilayer. May participate in the regulation of osmotic pressure changes within the cell. In Rhizobium leguminosarum bv. trifolii (strain WSM2304), this protein is Large-conductance mechanosensitive channel.